We begin with the raw amino-acid sequence, 156 residues long: Transcriptional regulator MraZ (156 aa).

2 SpoVT-AbrB domains span residues 5–51 (TFEK…GKAL) and 80–123 (MAKL…SREA).

Belongs to the MraZ family. Forms oligomers.

Its subcellular location is the cytoplasm. It is found in the nucleoid. The protein is Transcriptional regulator MraZ of Caulobacter vibrioides (strain ATCC 19089 / CIP 103742 / CB 15) (Caulobacter crescentus).